The following is a 274-amino-acid chain: Nitrogenase iron protein (274 aa).

8-15 is an ATP binding site; the sequence is GKGGIGKS. C94 is a binding site for [4Fe-4S] cluster. R97 carries the post-translational modification ADP-ribosylarginine; by dinitrogenase reductase ADP-ribosyltransferase. Residue C131 participates in [4Fe-4S] cluster binding.

This sequence belongs to the NifH/BchL/ChlL family. Homodimer. [4Fe-4S] cluster serves as cofactor. Post-translationally, the reversible ADP-ribosylation of Arg-97 inactivates the nitrogenase reductase and regulates nitrogenase activity.

It catalyses the reaction N2 + 8 reduced [2Fe-2S]-[ferredoxin] + 16 ATP + 16 H2O = H2 + 8 oxidized [2Fe-2S]-[ferredoxin] + 2 NH4(+) + 16 ADP + 16 phosphate + 6 H(+). In terms of biological role, the key enzymatic reactions in nitrogen fixation are catalyzed by the nitrogenase complex, which has 2 components: the iron protein and the molybdenum-iron protein. The protein is Nitrogenase iron protein of Chlorobium limicola (strain DSM 245 / NBRC 103803 / 6330).